The following is a 338-amino-acid chain: Eukaryotic translation initiation factor 3 subunit H (338 aa).

An MPN domain is found at 22 to 154 (VQCDGLAVMK…LKAYRLTPQA (133 aa)).

This sequence belongs to the eIF-3 subunit H family. As to quaternary structure, component of the eukaryotic translation initiation factor 3 (eIF-3) complex. The eIF-3 complex interacts with pix. Interacts with mxt.

It is found in the cytoplasm. In terms of biological role, component of the eukaryotic translation initiation factor 3 (eIF-3) complex, which is involved in protein synthesis of a specialized repertoire of mRNAs and, together with other initiation factors, stimulates binding of mRNA and methionyl-tRNAi to the 40S ribosome. The eIF-3 complex specifically targets and initiates translation of a subset of mRNAs involved in cell proliferation. The protein is Eukaryotic translation initiation factor 3 subunit H of Drosophila erecta (Fruit fly).